The primary structure comprises 317 residues: tRNA dimethylallyltransferase (317 aa).

Gly19–Ser26 lines the ATP pocket. Thr21–Ser26 is a substrate binding site. An interaction with substrate tRNA region spans residues Asp44–Gln47.

This sequence belongs to the IPP transferase family. Monomer. It depends on Mg(2+) as a cofactor.

It carries out the reaction adenosine(37) in tRNA + dimethylallyl diphosphate = N(6)-dimethylallyladenosine(37) in tRNA + diphosphate. Catalyzes the transfer of a dimethylallyl group onto the adenine at position 37 in tRNAs that read codons beginning with uridine, leading to the formation of N6-(dimethylallyl)adenosine (i(6)A). The chain is tRNA dimethylallyltransferase from Methylorubrum populi (strain ATCC BAA-705 / NCIMB 13946 / BJ001) (Methylobacterium populi).